We begin with the raw amino-acid sequence, 516 residues long: MLRVVSWNINGIRSPLQGLACQEPSSCPTALRRVLDELDADIVCLQETKVTRDVLTEPLAIVEGYNSYFSFSRSRSGYSGVATFCKDSATPVAAEEGLSGVFATLNGDIGCYGNMDEFTQEELRVLDSEGRALLTQHKIRTLEGKEKTLTLINVYCPHADPGKPERLTFKMRFYRLLQMRAEALLAAGSHVIILGDLNTAHRPIDHCDASSLECFEEDPGRKWMDGLLSNPGDEAGPHIGLFMDSYRYLHPKQQRAFTCWSVVSGARHLNYGSRLDYVLGDRALVIDTFQASFLLPEVMGSDHCPVGAVLNVSCVPAKQCPALCTRFLPEFAGTQLKILRFLVPLEQEPVREQQVLQPSHQIQAQRQPRKACMHSTRLRKSQGGPKRKQKNLMSYFQPSSSLSQTSGVELPTLPLVGPLTTPKTAEEVATATVLEEKNKVPESKDEKGERTAFWKSMLSGPSPMPLCGGHREPCVMRTVKKTGPNFGRQFYMCARPRGPPSDPSSRCNFFLWSRPS.

Mg(2+)-binding residues include asparagine 8 and glutamate 47. The active site involves tyrosine 155. Residues aspartate 196, asparagine 198, aspartate 302, and histidine 303 each contribute to the Mg(2+) site. Catalysis depends on aspartate 196, which acts as the Proton donor/acceptor. Catalysis depends on histidine 303, which acts as the Proton acceptor. Polar residues predominate over residues 357-366 (QPSHQIQAQR). The segment at 357–389 (QPSHQIQAQRQPRKACMHSTRLRKSQGGPKRKQ) is disordered. The segment covering 367–389 (QPRKACMHSTRLRKSQGGPKRKQ) has biased composition (basic residues). Lysine 370 participates in a covalent cross-link: Glycyl lysine isopeptide (Lys-Gly) (interchain with G-Cter in ubiquitin). The required for the interaction and colocalization with PCNA in nuclear foci in presence of oxidative-induced DNA damaging agents stretch occupies residues 389–396 (QKNLMSYF). Zn(2+) contacts are provided by cysteine 467, histidine 470, cysteine 493, and cysteine 507. A GRF-type zinc finger spans residues 467–516 (CGGHREPCVMRTVKKTGPNFGRQFYMCARPRGPPSDPSSRCNFFLWSRPS).

The protein belongs to the DNA repair enzymes AP/ExoA family. In terms of assembly, interacts with PCNA. This interaction is increased by misincorporation of uracil in nuclear DNA. Mg(2+) serves as cofactor. Mn(2+) is required as a cofactor. Post-translationally, ubiquitinated by the CUL9-RBX1 complex. Ubiquitinated by MKRN3 at Lys-370 leading to proteasomal degradation. Expressed in lymphocytes, thymocytes and splenocytes (at protein level). Highly expressed in the thymus and weakly expressed in the bone marrow, spleen, eye, kidney, lung, brain and uterus.

Its subcellular location is the nucleus. It is found in the cytoplasm. It localises to the mitochondrion. It catalyses the reaction Exonucleolytic cleavage in the 3'- to 5'-direction to yield nucleoside 5'-phosphates.. 3'-5' exonuclease activity is activated by sodium and manganese. 3'-5' exonuclease and 3'-phosphodiesterase activities are stimulated in presence of PCNA. Functionally, functions as a weak apurinic/apyrimidinic (AP) endodeoxyribonuclease in the DNA base excision repair (BER) pathway of DNA lesions induced by oxidative and alkylating agents. Initiates repair of AP sites in DNA by catalyzing hydrolytic incision of the phosphodiester backbone immediately adjacent to the damage, generating a single-strand break with 5'-deoxyribose phosphate and 3'-hydroxyl ends. Also displays double-stranded DNA 3'-5' exonuclease, 3'-phosphodiesterase activities. Shows robust 3'-5' exonuclease activity on 3'-recessed heteroduplex DNA and is able to remove mismatched nucleotides preferentially. Shows fairly strong 3'-phosphodiesterase activity involved in the removal of 3'-damaged termini formed in DNA by oxidative agents. In the nucleus functions in the PCNA-dependent BER pathway. Plays a role in reversing blocked 3' DNA ends, problematic lesions that preclude DNA synthesis. Required for somatic hypermutation (SHM) and DNA cleavage step of class switch recombination (CSR) of immunoglobulin genes. Required for proper cell cycle progression during proliferation of peripheral lymphocytes. The protein is DNA-(apurinic or apyrimidinic site) endonuclease 2 (Apex2) of Mus musculus (Mouse).